Consider the following 294-residue polypeptide: Tissue factor (294 aa).

The N-terminal stretch at 1–28 (MAILVRPRLLAALAPTFLGCLLLQVIAG) is a signal peptide. At 29-251 (AGIPEKAFNL…TEQWKSFLGE (223 aa)) the chain is on the extracellular side. Residues Asn-37 and Asn-57 are each glycosylated (N-linked (GlcNAc...) asparagine). Cys-75 and Cys-83 form a disulfide bridge. N-linked (GlcNAc...) asparagine glycans are attached at residues Asn-169 and Asn-200. A disulfide bond links Cys-218 and Cys-241. Positions 245-247 (WKS) match the WKS motif motif. The helical transmembrane segment at 252–274 (TLIIVGAVVLLATIFIILLSISL) threads the bilayer. Cys-275 carries S-palmitoyl cysteine lipidation. The Cytoplasmic portion of the chain corresponds to 275 to 294 (CKRRKNRAGQKGKNTPSRLA).

It belongs to the tissue factor family. In terms of assembly, interacts with HSPE; the interaction, inhibited by heparin, promotes the generation of activated factor X and activates coagulation in the presence of activated factor VII.

Its subcellular location is the membrane. In terms of biological role, initiates blood coagulation by forming a complex with circulating factor VII or VIIa. The [TF:VIIa] complex activates factors IX or X by specific limited proteolysis. TF plays a role in normal hemostasis by initiating the cell-surface assembly and propagation of the coagulation protease cascade. In Mus musculus (Mouse), this protein is Tissue factor (F3).